We begin with the raw amino-acid sequence, 318 residues long: MKPLNIIFAGTPDFAARHLQALINSHHNVIAVYTQPDRPAGRGKKLTASPVKELAVSHNIPVYQPGSLRKEPAQQELAALNADIMVVVAYGLILPKVVLDTPRLGCINVHGSILPRWRGAAPIQRALWAGDKETGVTIMQMDVGLDTGDMLLKTYLPIEDDDTSATLYEKLALQGPDALLQALEGLANGTLTAEKQDEALANYAEKLSKEEARLDWSKSATQLWQEVRAFNPWPVSYFEHQGNTIKVWQTQVSTTSSNAAPGTIISASKKGIEVATGDGVLTLLSMQLPGKKPLSVADILNARGDWFTPNTRLNHEAQ.

A (6S)-5,6,7,8-tetrahydrofolate-binding site is contributed by 112–115; sequence SILP.

The protein belongs to the Fmt family.

It carries out the reaction L-methionyl-tRNA(fMet) + (6R)-10-formyltetrahydrofolate = N-formyl-L-methionyl-tRNA(fMet) + (6S)-5,6,7,8-tetrahydrofolate + H(+). In terms of biological role, attaches a formyl group to the free amino group of methionyl-tRNA(fMet). The formyl group appears to play a dual role in the initiator identity of N-formylmethionyl-tRNA by promoting its recognition by IF2 and preventing the misappropriation of this tRNA by the elongation apparatus. This is Methionyl-tRNA formyltransferase from Shewanella sp. (strain MR-4).